The primary structure comprises 483 residues: Glutamyl-tRNA(Gln) amidotransferase subunit A (483 aa).

Residues Lys76 and Ser151 each act as charge relay system in the active site. Ser175 serves as the catalytic Acyl-ester intermediate.

The protein belongs to the amidase family. GatA subfamily. In terms of assembly, heterotrimer of A, B and C subunits.

The catalysed reaction is L-glutamyl-tRNA(Gln) + L-glutamine + ATP + H2O = L-glutaminyl-tRNA(Gln) + L-glutamate + ADP + phosphate + H(+). Its function is as follows. Allows the formation of correctly charged Gln-tRNA(Gln) through the transamidation of misacylated Glu-tRNA(Gln) in organisms which lack glutaminyl-tRNA synthetase. The reaction takes place in the presence of glutamine and ATP through an activated gamma-phospho-Glu-tRNA(Gln). The polypeptide is Glutamyl-tRNA(Gln) amidotransferase subunit A (Nitrosospira multiformis (strain ATCC 25196 / NCIMB 11849 / C 71)).